Here is a 208-residue protein sequence, read N- to C-terminus: Adenylate kinase (208 aa).

An ATP-binding site is contributed by 10–15; it reads GAGKGT. The segment at 30-59 is NMP; it reads STGEMLRAAVAAGTPVGLKAKDVMASGGLV. AMP-binding positions include Thr-31, Arg-36, 57-59, 85-88, and Gln-92; these read GLV and GFPR. The LID stretch occupies residues 126 to 142; the sequence is SRVAEMTARGEQVRADD. Arg-127 serves as a coordination point for ATP. 2 residues coordinate AMP: Arg-139 and Arg-150. Met-178 provides a ligand contact to ATP.

It belongs to the adenylate kinase family. In terms of assembly, monomer.

Its subcellular location is the cytoplasm. It catalyses the reaction AMP + ATP = 2 ADP. It functions in the pathway purine metabolism; AMP biosynthesis via salvage pathway; AMP from ADP: step 1/1. Its function is as follows. Catalyzes the reversible transfer of the terminal phosphate group between ATP and AMP. Plays an important role in cellular energy homeostasis and in adenine nucleotide metabolism. The protein is Adenylate kinase of Nitrobacter hamburgensis (strain DSM 10229 / NCIMB 13809 / X14).